The sequence spans 454 residues: Aspartate aminotransferase P2, mitochondrial (454 aa).

The transit peptide at 1-49 directs the protein to the mitochondrion; the sequence is SSLLSIPSLSLQYNDKLKVGGNSLRFSKEQSNTFSNAKSSCRISMVAAV. L-aspartate-binding residues include Gly-86, Trp-182, and Asn-235. Lys-299 is modified (N6-(pyridoxal phosphate)lysine). L-aspartate is bound at residue Arg-428.

This sequence belongs to the class-I pyridoxal-phosphate-dependent aminotransferase family. As to quaternary structure, homodimer. Requires pyridoxal 5'-phosphate as cofactor.

It is found in the mitochondrion matrix. The enzyme catalyses L-aspartate + 2-oxoglutarate = oxaloacetate + L-glutamate. Its function is as follows. Important for the metabolism of amino acids and Krebs-cycle related organic acids. In plants, it is involved in nitrogen metabolism and in aspects of carbon and energy metabolism. The polypeptide is Aspartate aminotransferase P2, mitochondrial (Lupinus angustifolius (Narrow-leaved blue lupine)).